A 689-amino-acid chain; its full sequence is Small ribosomal subunit protein mS39 (689 aa).

The transit peptide at 1-37 directs the protein to the mitochondrion; it reads MAVVSAVRWLGLRSRLGQPLTGRRAGLCEQARSCRFY. Residue Lys-126 is modified to N6-acetyllysine. PPR repeat units follow at residues 149–183, 184–219, 255–289, 290–330, 331–367, 368–409, 412–446, 454–488, 489–523, and 572–606; these read IKDI…GTTV, SLET…EALE, NEHS…RLHA, DVYT…KVKP, NLQT…GIEP, SLAT…SPKD, DDKF…DNWK, RNFY…AYFP, HSQT…GHTF, and PATS…NKIP. The tract at residues 665–689 is disordered; that stretch reads NLTALTSDSDTDSSSDSDSDTSEGK. Residues 673–689 are compositionally biased toward acidic residues; it reads SDTDSSSDSDSDTSEGK.

It belongs to the mitochondrion-specific ribosomal protein mS39 family. As to quaternary structure, component of the mitochondrial small ribosomal subunit (mt-SSU). Mature mammalian 55S mitochondrial ribosomes consist of a small (28S) and a large (39S) subunit. The 28S small subunit contains a 12S ribosomal RNA (12S mt-rRNA) and 30 different proteins. The 39S large subunit contains a 16S rRNA (16S mt-rRNA), a copy of mitochondrial valine transfer RNA (mt-tRNA(Val)), which plays an integral structural role, and 52 different proteins. Associated with the 12S mitochondrial rRNA (12S mt-rRNA). In terms of tissue distribution, abundant in testes, skeletal muscle and heart tissue.

The protein resides in the mitochondrion. Its function is as follows. Mitochondrial RNA-binding protein that has a role in mitochondrial translation. The protein is Small ribosomal subunit protein mS39 (PTCD3) of Homo sapiens (Human).